The sequence spans 473 residues: BPI fold-containing family B member 3 (473 aa).

Positions 1–20 are cleaved as a signal peptide; the sequence is MMPGVYALLLLWGLATPCLG. Asn-139 carries N-linked (GlcNAc...) asparagine glycosylation. A disulfide bridge links Cys-161 with Cys-196.

Belongs to the BPI/LBP/Plunc superfamily. BPI/LBP family. In terms of tissue distribution, highly expressed in olfactory mucosa but undetectable in thymus, kidney, lung, brain, spleen and liver.

The protein localises to the secreted. Its function is as follows. May have the capacity to recognize and bind specific classes of odorants. May act as a carrier molecule, transporting odorants across the mucus layer to access receptor sites. May serve as a primary defense mechanism by recognizing and removing potentially harmful odorants or pathogenic microorganisms from the mucosa or clearing excess odorant from mucus to enable new odorant stimuli to be received. This Rattus norvegicus (Rat) protein is BPI fold-containing family B member 3.